Consider the following 93-residue polypeptide: Small ribosomal subunit protein uS19c (93 aa).

This sequence belongs to the universal ribosomal protein uS19 family.

It localises to the plastid. The protein resides in the chloroplast. Protein S19 forms a complex with S13 that binds strongly to the 16S ribosomal RNA. In Ipomoea purpurea (Common morning glory), this protein is Small ribosomal subunit protein uS19c.